The chain runs to 454 residues: Transcription factor bHLH123 (454 aa).

Low complexity predominate over residues 101–113 (SNANANTTSSTSS). Disordered stretches follow at residues 101 to 127 (SNANANTTSSTSSYQLQESDSSHHHQA), 185 to 228 (ATTT…QFGS), 270 to 348 (AAAG…KRKE), and 398 to 417 (GASLQHQQSDHSTELEVSEE). Polar residues-rich tracts occupy residues 185–195 (ATTTTPNSSSG) and 207–228 (SSDQQPSRNHQQSSLGYSQFGS). Positions 303–324 (EQPKNISEIRDSSSNEVKRGGN) are enriched in basic and acidic residues. A bHLH domain is found at 334 to 383 (KSEAASPSPAFKRKEKMGDRIAALQQLVSPFGKTDAASVLSEAIEYIKFL).

In terms of assembly, homodimer.

Its subcellular location is the nucleus. The sequence is that of Transcription factor bHLH123 (BHLH123) from Arabidopsis thaliana (Mouse-ear cress).